A 214-amino-acid chain; its full sequence is MASSASRFIKCVTVGDGAVGKTCMLICYTSNKFPTDYIPTVFDNFSANVVVDSTTVNLGLWDTAGQEDYNRLRPLSYRGADVFVLAFSLVSRASYENIMKKWIPELQHYAPGVPIVLVGTKLDLREDKHYLLDHPGMIPVTTAQGEELRKQIGAAYYIECSSKTQQNVKGVFDAAIKVVIQPPTKQREKKKKKSRQGCSMMNMFRGRKMSCFKS.

Residue 15 to 22 (GDGAVGKT) coordinates GTP. The Effector region motif lies at 37 to 45 (YIPTVFDNF). Residues 62–66 (DTAGQ) and 120–123 (TKLD) contribute to the GTP site.

Belongs to the small GTPase superfamily. Rho family. In terms of processing, may be palmitoylated.

Its subcellular location is the cytoplasm. It is found in the membrane. In terms of biological role, inactive GDP-bound Rho GTPases reside in the cytosol, are found in a complex with Rho GDP-dissociation inhibitors (Rho GDIs), and are released from the GDI protein in order to translocate to membranes upon activation. This Oryza sativa subsp. japonica (Rice) protein is Rac-like GTP-binding protein 3 (RAC3).